A 397-amino-acid polypeptide reads, in one-letter code: GPI mannosyltransferase 1 (397 aa).

9 helical membrane-spanning segments follow: residues 5–25 (ECLL…YGIY), 79–99 (WVHF…VMVM), 111–128 (LILA…TVST), 156–176 (GFVY…ALPI), 193–213 (LTMG…MYYI), 257–277 (WAEF…YVLW), 307–327 (YFIW…LSGA), 330–350 (IFLI…GYLL), and 362–382 (LFSA…QFIL).

It belongs to the PIGM family.

The protein resides in the endoplasmic reticulum membrane. Its pathway is glycolipid biosynthesis; glycosylphosphatidylinositol-anchor biosynthesis. Mannosyltransferase involved in glycosylphosphatidylinositol-anchor biosynthesis. Transfers the first alpha-1,4-mannose to GlcN-acyl-PI during GPI precursor assembly. Required for cell wall integrity. This is GPI mannosyltransferase 1 (GPI14) from Eremothecium gossypii (strain ATCC 10895 / CBS 109.51 / FGSC 9923 / NRRL Y-1056) (Yeast).